Reading from the N-terminus, the 336-residue chain is Terephthalate 1,2-dioxygenase, reductase component 1 (336 aa).

Residues 3 to 91 (HQIHIHDSDI…DIRIQPSSFR (89 aa)) form the 2Fe-2S ferredoxin-type domain. [2Fe-2S] cluster-binding residues include Cys37, Cys42, Cys45, and Cys75. In terms of domain architecture, FAD-binding FR-type spans 98–197 (RKRFTAKVYS…ELPFGSIALK (100 aa)).

In terms of assembly, monomer. Part of a multicomponent enzyme system composed of a reductase (TphA1I or TphA1II) and a two-subunit oxygenase component (TphA2I or TphA2II and TphA3I or TphA3II). The cofactor is FAD. Requires [2Fe-2S] cluster as cofactor.

The enzyme catalyses terephthalate + NADH + O2 + H(+) = (3S,4R)-3,4-dihydroxycyclohexa-1,5-diene-1,4-dicarboxylate + NAD(+). In terms of biological role, component of the terephthalate 1,2-dioxygenase multicomponent enzyme system which catalyzes the dioxygenation of terephthalate (TER/TPA) to 1,2-dihydroxy-3,5-cyclohexadiene-1,4-dicarboxylic acid (DCD). TphA1 probably reduces TphA2A3. It can also use 2,5-dicarboxypyridine (PDC) and 1,4-napthalenedicarboxylic acid (NDC) as substrates, and preferentially uses NADPH which is the physiological electron donor. This Comamonas sp protein is Terephthalate 1,2-dioxygenase, reductase component 1 (tphA1I).